The sequence spans 406 residues: UPF0754 membrane protein Cyan7425_4067 (406 aa).

A helical membrane pass occupies residues 381–401 (IVTLGGVLGLLIGIAQSVLLL).

Belongs to the UPF0754 family.

The protein localises to the cell inner membrane. This chain is UPF0754 membrane protein Cyan7425_4067, found in Cyanothece sp. (strain PCC 7425 / ATCC 29141).